The primary structure comprises 197 residues: RNA pyrophosphohydrolase (197 aa).

One can recognise a Nudix hydrolase domain in the interval 6-150 (GYRPNVGIVI…KRDVYRKVMR (145 aa)). The Nudix box signature appears at 38–59 (GGINEGENIETAMYRELYEEVG).

The protein belongs to the Nudix hydrolase family. RppH subfamily. Requires a divalent metal cation as cofactor.

Accelerates the degradation of transcripts by removing pyrophosphate from the 5'-end of triphosphorylated RNA, leading to a more labile monophosphorylated state that can stimulate subsequent ribonuclease cleavage. The protein is RNA pyrophosphohydrolase of Haemophilus ducreyi (strain 35000HP / ATCC 700724).